Reading from the N-terminus, the 459-residue chain is 5-hydroxytryptamine receptor 2C (459 aa).

An N-terminal signal peptide occupies residues 1–32 (MVNLGTAVRSLLVHLIGLLVWQFDISISPVAA). The Extracellular segment spans residues 33–56 (IVTDTFNSSDGGRLFQFPDGVQNW). The helical transmembrane segment at 57–81 (PALSIVVIIIMTIGGNILVIMAVSM) threads the bilayer. Topologically, residues 82 to 87 (EKKLHN) are cytoplasmic. Residues 88 to 112 (ATNYFLMSLAIADMLVGLLVMPLSL) traverse the membrane as a helical segment. Residues 113–129 (LAILYDYVWPLPRYLCP) lie on the Extracellular side of the membrane. A disulfide bridge connects residues cysteine 128 and cysteine 208. The chain crosses the membrane as a helical span at residues 130 to 152 (VWISLDVLFSTASIMHLCAISLD). Ergotamine is bound at residue threonine 140. The DRY motif; important for ligand-induced conformation changes signature appears at 152-154 (DRY). Residues 153 to 168 (RYVAIRNPIEHSRFNS) lie on the Cytoplasmic side of the membrane. Residues 169 to 190 (RTKAIMKIAIVWAISIGVSVPI) form a helical membrane-spanning segment. The Extracellular segment spans residues 191–214 (PVIGLRDESKVFVNNTTCVLNDPN). Asparagine 204 and asparagine 205 each carry an N-linked (GlcNAc...) asparagine glycan. Leucine 210 contacts ergotamine. Residues 215-237 (FVLIGSFVAFFIPLTIMVITYFL) form a helical membrane-spanning segment. Topologically, residues 238–312 (TIYVLRRQTL…AINNEKKASK (75 aa)) are cytoplasmic. The interval 274 to 302 (DEEENAPNPNPDQKPRRKKKEKRPRGTMQ) is disordered. Basic residues predominate over residues 288 to 298 (PRRKKKEKRPR). The helical transmembrane segment at 313-337 (VLGIVFFVFLIMWCPFFITNILSVL) threads the bilayer. Residues cysteine 338 and cysteine 342 are joined by a disulfide bond. At 338–348 (CGKACNQKLME) the chain is on the extracellular side. The helical transmembrane segment at 349 to 371 (KLLNVFVWIGYVCSGINPLVYTL) threads the bilayer. Residues 365-369 (NPLVY) carry the NPxxY motif; important for ligand-induced conformation changes and signaling motif. Over 372 to 459 (FNKIYRRAFS…NVVSERISSV (88 aa)) the chain is Cytoplasmic. A PDZ-binding motif is present at residues 457–459 (SSV).

It belongs to the G-protein coupled receptor 1 family. In terms of assembly, interacts with MPDZ. Interacts with ARRB2. Interacts with MPP3; this interaction stabilizes the receptor at the plasma membrane and prevents the desensitization of the HTR2C receptor-mediated calcium response. Detected in brain cortex, hypothalamus, brainstem and arcuate nucleus. Detected in the paraventricular nucleus of the hypothalamus.

It is found in the cell membrane. In terms of biological role, G-protein coupled receptor for 5-hydroxytryptamine (serotonin). Also functions as a receptor for various drugs and psychoactive substances, including ergot alkaloid derivatives, 1-2,5,-dimethoxy-4-iodophenyl-2-aminopropane (DOI) and lysergic acid diethylamide (LSD). Ligand binding causes a conformation change that triggers signaling via guanine nucleotide-binding proteins (G proteins) and modulates the activity of downstream effectors. HTR2C is coupled to G(q)/G(11) G alpha proteins and activates phospholipase C-beta, releasing diacylglycerol (DAG) and inositol 1,4,5-trisphosphate (IP3) second messengers that modulate the activity of phosphatidylinositol 3-kinase and promote the release of Ca(2+) ions from intracellular stores, respectively. Beta-arrestin family members inhibit signaling via G proteins and mediate activation of alternative signaling pathways. Regulates neuronal activity via the activation of short transient receptor potential calcium channels in the brain, and thereby modulates the activation of pro-opiomelanocortin neurons and the release of CRH that then regulates the release of corticosterone. Plays a role in the regulation of appetite and eating behavior, responses to anxiogenic stimuli and stress. Plays a role in insulin sensitivity and glucose homeostasis. The sequence is that of 5-hydroxytryptamine receptor 2C from Mus musculus (Mouse).